A 549-amino-acid polypeptide reads, in one-letter code: Glucose-6-phosphate isomerase (549 aa).

Glu353 (proton donor) is an active-site residue. Active-site residues include His384 and Lys512.

It belongs to the GPI family.

The protein resides in the cytoplasm. It catalyses the reaction alpha-D-glucose 6-phosphate = beta-D-fructose 6-phosphate. Its pathway is carbohydrate biosynthesis; gluconeogenesis. It functions in the pathway carbohydrate degradation; glycolysis; D-glyceraldehyde 3-phosphate and glycerone phosphate from D-glucose: step 2/4. Catalyzes the reversible isomerization of glucose-6-phosphate to fructose-6-phosphate. The protein is Glucose-6-phosphate isomerase of Solidesulfovibrio magneticus (strain ATCC 700980 / DSM 13731 / RS-1) (Desulfovibrio magneticus).